Consider the following 509-residue polypeptide: Major envelope glycoprotein (509 aa).

Positions 1-17 (MVRTAVLILLLVRFSEP) are cleaved as a signal peptide. N34, N156, N194, N351, N381, and N423 each carry an N-linked (GlcNAc...) asparagine; by host glycan. S479 carries O-palmitoyl serine; by host lipidation. A helical membrane pass occupies residues 480–502 (FMLGHAFSFMLTVGVIIFLFCMV). The N-linked (GlcNAc...) asparagine; by host glycan is linked to N504.

This sequence belongs to the baculoviridae gp64 family. Post-translationally, palmitoylated.

It localises to the virion membrane. Its subcellular location is the host cell membrane. Functionally, envelope phosphoglycoprotein which mediates the fusion of viral and host endosomal membranes leading to virus entry into the host cell. The chain is Major envelope glycoprotein (GP67) from Choristoneura fumiferana nuclear polyhedrosis virus (CfMNPV).